Reading from the N-terminus, the 2103-residue chain is Orsellinic acid synthase (2103 aa).

Residues 17–232 (DAVHDLNVRS…KRPELAHATI (216 aa)) form an N-terminal acylcarrier protein transacylase domain (SAT) region. The Ketosynthase family 3 (KS3) domain maps to 348 to 782 (ADAIAVVGMS…GGNVSMLLQD (435 aa)). Active-site for beta-ketoacyl synthase activity residues include Cys525, His660, and His702. The tract at residues 881–1197 (VFTFTGQGAQ…RRGGDDWQSV (317 aa)) is malonyl-CoA:ACP transacylase (MAT) domain. The active-site For acyl/malonyl transferase activity is the Ser973. Residues 1272–1409 (HAVEKLQREE…GQPDSAVRRD (138 aa)) form an N-terminal hotdog fold region. The region spanning 1272–1582 (HAVEKLQREE…FKKLERDFFA (311 aa)) is the PKS/mFAS DH domain. Positions 1303 to 1579 (GHVVDESAIC…DICFKKLERD (277 aa)) are product template (PT) domain. The active-site Proton acceptor; for dehydratase activity is His1304. Residues 1433–1582 (VHAMDTALFY…FKKLERDFFA (150 aa)) form a C-terminal hotdog fold region. Asp1493 acts as the Proton donor; for dehydratase activity in catalysis. Positions 1592–1638 (STKPVAAAPAKSMAKRARQLAPSPSPSSSSGSNTPMSRSPTPSSVSD) are disordered. Low complexity-rich tracts occupy residues 1594-1603 (KPVAAAPAKS) and 1617-1631 (PSSS…SRSP). 2 Carrier domains span residues 1640–1716 (VDLG…GGSA) and 1741–1815 (PAPS…DDDA). At Ser1676 the chain carries O-(pantetheine 4'-phosphoryl)serine. Residues 1722–1743 (EDITKPTPSPEQTQARKQGPAP) are disordered. Ser1775 is subject to O-(pantetheine 4'-phosphoryl)serine. The disordered stretch occupies residues 1809–1838 (EALDDDAEEESAPAQTSTNPAKETTIDSSR). Acidic residues predominate over residues 1810 to 1819 (ALDDDAEEES). The span at 1823–1836 (QTSTNPAKETTIDS) shows a compositional bias: polar residues. The tract at residues 1849 to 2082 (ASYIHLKALP…TVNGDHFSMM (234 aa)) is thioesterase (TE) domain.

It carries out the reaction 3 malonyl-CoA + acetyl-CoA + 2 H(+) = orsellinate + 3 CO2 + 4 CoA. It participates in secondary metabolite biosynthesis. In terms of biological role, non-reducing polyketide synthase; part of the gene cluster that mediates the biosynthesis of orsellinic acid, as well as of the cathepsin K inhibitors F9775 A and F9775 B. The non-reducing polyketide synthase orsA produces orsellinic acid by condensing acetyl-CoA with 3 malonyl-CoA units. Further modifications by the decarboxylase orsB and the tyrosinase-like protein orsC lead to the production of F9775 A and F9775 B. The functions of orsD and orsE remain unclear since only orsB and orsC are required to convert orsellinic acid into F9775 A and F9775 B. The protein is Orsellinic acid synthase of Emericella nidulans (strain FGSC A4 / ATCC 38163 / CBS 112.46 / NRRL 194 / M139) (Aspergillus nidulans).